The sequence spans 394 residues: Cytohesin-4 (394 aa).

The stretch at 12-65 forms a coiled coil; that stretch reads SSGETEELQRIKWHRKQLLEDIQKLKDEIADVFAQIDCFESAEESRMAQKEKEL. The SEC7 domain occupies 54-241; it reads EESRMAQKEK…RNLFDSIKSE (188 aa). The region spanning 259–375 is the PH domain; the sequence is NPDREGWLLK…WIESIRASIT (117 aa). A 1,2-diacyl-sn-glycero-3-phospho-(1D-myo-inositol-3,4,5-trisphosphate)-binding positions include 268 to 275, arginine 279, tyrosine 290, and arginine 300; that span reads KLGGRVKT. The interval 386–394 is C-terminal autoinhibitory region; it reads RKKKIASKQ.

Expressed predominantly in peripheral blood leukocytes.

Its subcellular location is the cell membrane. Functionally, promotes guanine-nucleotide exchange on ARF1 and ARF5. Promotes the activation of ARF factors through replacement of GDP with GTP. The chain is Cytohesin-4 (CYTH4) from Homo sapiens (Human).